A 265-amino-acid polypeptide reads, in one-letter code: Cell division protein FtsQ (265 aa).

Low complexity predominate over residues 1–13; that stretch reads MAGATTAKGGARR. The interval 1-25 is disordered; sequence MAGATTAKGGARRTPPPGPPPPALK. Topologically, residues 1-35 are cytoplasmic; that stretch reads MAGATTAKGGARRTPPPGPPPPALKARRRLRLPRR. Residues 14–23 are compositionally biased toward pro residues; the sequence is TPPPGPPPPA. A helical membrane pass occupies residues 36-58; the sequence is RTLLVTGVATALLGSGVTWLLYG. The Extracellular portion of the chain corresponds to 59–265; that stretch reads SSWLRVEQVA…APTAPAVTHS (207 aa). In terms of domain architecture, POTRA spans 62 to 131; sequence LRVEQVAVSG…DTIAVRVTER (70 aa).

It belongs to the FtsQ/DivIB family. FtsQ subfamily.

The protein localises to the cell membrane. Its function is as follows. Essential cell division protein. This is Cell division protein FtsQ from Streptomyces bingchenggensis (strain BCW-1).